We begin with the raw amino-acid sequence, 714 residues long: Fatty acid oxidation complex subunit alpha (714 aa).

The interval 1-190 (MEMASAFTLN…KLGLVDDVVP (190 aa)) is enoyl-CoA hydratase. Positions 306-714 (APLNSVGILG…FWKTTATDLQ (409 aa)) are 3-hydroxyacyl-CoA dehydrogenase.

It in the N-terminal section; belongs to the enoyl-CoA hydratase/isomerase family. This sequence in the central section; belongs to the 3-hydroxyacyl-CoA dehydrogenase family. Heterotetramer of two alpha chains (FadJ) and two beta chains (FadI).

It localises to the cytoplasm. It carries out the reaction a (3S)-3-hydroxyacyl-CoA = a (2E)-enoyl-CoA + H2O. The enzyme catalyses a 4-saturated-(3S)-3-hydroxyacyl-CoA = a (3E)-enoyl-CoA + H2O. It catalyses the reaction a (3S)-3-hydroxyacyl-CoA + NAD(+) = a 3-oxoacyl-CoA + NADH + H(+). The catalysed reaction is (3S)-3-hydroxybutanoyl-CoA = (3R)-3-hydroxybutanoyl-CoA. Its pathway is lipid metabolism; fatty acid beta-oxidation. Catalyzes the formation of a hydroxyacyl-CoA by addition of water on enoyl-CoA. Also exhibits 3-hydroxyacyl-CoA epimerase and 3-hydroxyacyl-CoA dehydrogenase activities. This is Fatty acid oxidation complex subunit alpha from Escherichia coli O6:K15:H31 (strain 536 / UPEC).